The primary structure comprises 558 residues: 2-isopropylmalate synthase (558 aa).

The 276-residue stretch at 31 to 306 (PIWCAVDLRD…DPGIDFSNID (276 aa)) folds into the Pyruvate carboxyltransferase domain. The Mg(2+) site is built by aspartate 40, histidine 245, histidine 247, and asparagine 281. A regulatory domain region spans residues 440–558 (AGSPYSFLEH…LCAANHLSDK (119 aa)).

The protein belongs to the alpha-IPM synthase/homocitrate synthase family. LeuA type 2 subfamily. As to quaternary structure, homodimer. The cofactor is Mg(2+).

It is found in the cytoplasm. It catalyses the reaction 3-methyl-2-oxobutanoate + acetyl-CoA + H2O = (2S)-2-isopropylmalate + CoA + H(+). The protein operates within amino-acid biosynthesis; L-leucine biosynthesis; L-leucine from 3-methyl-2-oxobutanoate: step 1/4. In terms of biological role, catalyzes the condensation of the acetyl group of acetyl-CoA with 3-methyl-2-oxobutanoate (2-ketoisovalerate) to form 3-carboxy-3-hydroxy-4-methylpentanoate (2-isopropylmalate). This chain is 2-isopropylmalate synthase, found in Rhodospirillum rubrum (strain ATCC 11170 / ATH 1.1.1 / DSM 467 / LMG 4362 / NCIMB 8255 / S1).